Consider the following 210-residue polypeptide: Tetraspanin-31 (210 aa).

Over 1 to 12 (MVCGGFACSKNA) the chain is Cytoplasmic. The chain crosses the membrane as a helical span at residues 13–33 (LCALNVVYMLVGLLLIGVAAW). Over 34 to 44 (AKGLGLVSSIH) the chain is Extracellular. A helical membrane pass occupies residues 45 to 65 (IIGGVIAVGVFLLLIAVAGLV). Residues 66–72 (GAVNHHQ) are Cytoplasmic-facing. Residues 73-93 (VLLFFYMIILGLVFIFQFGIS) form a helical membrane-spanning segment. Over 94–173 (CSCLAINLSK…FLKHSDEALK (80 aa)) the chain is Extracellular. N-linked (GlcNAc...) asparagine glycans are attached at residues Asn100, Asn109, Asn117, and Asn134. The helical transmembrane segment at 174 to 194 (ILGGVGLFFSFTEILGVWLAM) threads the bilayer. Over 195-210 (RFRNQKDPRANPSAFL) the chain is Cytoplasmic.

It belongs to the tetraspanin (TM4SF) family.

The protein localises to the membrane. This Bos taurus (Bovine) protein is Tetraspanin-31 (TSPAN31).